A 37-amino-acid polypeptide reads, in one-letter code: Large ribosomal subunit protein bL36 (37 aa).

It belongs to the bacterial ribosomal protein bL36 family.

This Mycoplasmopsis synoviae (strain 53) (Mycoplasma synoviae) protein is Large ribosomal subunit protein bL36.